A 251-amino-acid chain; its full sequence is MGQKINPNGLRLGIIRTWDSQWFVQDKEIPALIKEDYLIRELINNFSKKSAISQIEIQRLKEKTKNRIKIYIHTAKPGVIIGRDGDTRNKMVAKLKELTQKDVDLNILEVKNSEKIALLIAQNIAEQLENRMNFRHVQKMAIQKALKAGVKGIKTLVSGRLNGAEIARSEGNDEGRVPLHTLRADIDYASLQAYTTYGVLGVKVWIFHGEVLPGQTILDTRKPFVFTNNRNSKYPSRYFKGGPKNVNTKKN.

Positions 39-111 (IRELINNFSK…DVDLNILEVK (73 aa)) constitute a KH type-2 domain.

The protein belongs to the universal ribosomal protein uS3 family. Part of the 30S ribosomal subunit. Forms a tight complex with proteins S10 and S14.

In terms of biological role, binds the lower part of the 30S subunit head. Binds mRNA in the 70S ribosome, positioning it for translation. The chain is Small ribosomal subunit protein uS3 from Phytoplasma sp. (strain STRAWB1).